The primary structure comprises 50 residues: Insulin (50 aa).

3 cysteine pairs are disulfide-bonded: cysteine 7–cysteine 36, cysteine 19–cysteine 49, and cysteine 35–cysteine 40.

It belongs to the insulin family. In terms of assembly, heterodimer of a B chain and an A chain linked by two disulfide bonds.

The protein localises to the secreted. Its function is as follows. Insulin decreases blood glucose concentration. It increases cell permeability to monosaccharides, amino acids and fatty acids. It accelerates glycolysis, the pentose phosphate cycle, and glycogen synthesis in liver. This is Insulin (ins) from Katsuwonus pelamis (Skipjack tuna).